A 457-amino-acid polypeptide reads, in one-letter code: 5' exonuclease Apollo (457 aa).

The TBM motif lies at 425-437 (ELPKQYLLTPLNA).

This sequence belongs to the DNA repair metallo-beta-lactamase (DRMBL) family. Interacts with TERF2; the interaction is direct.

Its subcellular location is the chromosome. It localises to the telomere. The protein resides in the nucleus. It catalyses the reaction a beta-lactam + H2O = a substituted beta-amino acid. In terms of biological role, 5'-3' exonuclease that plays a central role in telomere maintenance and protection during S-phase. Participates in the protection of telomeres against non-homologous end-joining (NHEJ)-mediated repair, thereby ensuring that telomeres do not fuse. Plays a key role in telomeric loop (T loop) formation by being recruited by TERF2 at the leading end telomeres and by processing leading-end telomeres immediately after their replication via its exonuclease activity: generates 3' single-stranded overhang at the leading end telomeres avoiding blunt leading-end telomeres that are vulnerable to end-joining reactions and expose the telomere end in a manner that activates the DNA repair pathways. May be required for DNA interstrand cross-link repair. Possesses beta-lactamase activity, catalyzing the hydrolysis of penicillin G and nitrocefin. Exhibits no activity towards other beta-lactam antibiotic classes including cephalosporins (cefotaxime) and carbapenems (imipenem). This chain is 5' exonuclease Apollo (DCLRE1B), found in Gallus gallus (Chicken).